A 698-amino-acid chain; its full sequence is Protein CRAC (698 aa).

Residues 22–122 enclose the PH domain; that stretch reads DVSYSSIMKK…FLTLLIARIR (101 aa). Residues 594 to 630 form a disordered region; the sequence is TGGGSVPSSQSTNNLQSSTSSMSSLSSSSTSTTKRSH. Low complexity predominate over residues 601 to 626; the sequence is SSQSTNNLQSSTSSMSSLSSSSTSTT.

Its subcellular location is the cytoplasm. In terms of biological role, couples activated G protein to adenylyl cyclase signal transduction from surface cAMP receptor. Pianissimo a cytosolic regulator and CRAC, are both essential for activation of the enzyme adenylyl cyclase. Pianissimo and CRAC do not function redundantly. Both proteins are integral components of the adenylyl cyclase activation pathway. This Dictyostelium discoideum (Social amoeba) protein is Protein CRAC (dagA).